Consider the following 91-residue polypeptide: Acylphosphatase (91 aa).

The 88-residue stretch at 4–91 (RAIVTIKGLV…GEFDDFDVRY (88 aa)) folds into the Acylphosphatase-like domain. Residues R19 and N37 contribute to the active site.

This sequence belongs to the acylphosphatase family.

It catalyses the reaction an acyl phosphate + H2O = a carboxylate + phosphate + H(+). In Geobacter sulfurreducens (strain ATCC 51573 / DSM 12127 / PCA), this protein is Acylphosphatase (acyP).